The sequence spans 372 residues: MTETKTQTETETDEEEGTDTDTALDTTIYYDDDADREYIDDKTVAVLGYGSQGHAHAQNLADSGIDVIVGLYEGSSSRDAARADGLRVETPATAADEADIVSVLVPDTVQPDVFEAIQDGLDAGDTLQFAHGFNIHYNQIQPPADVDVTMVAPKAPGHLVRRNYEAGEGTPGLVAVYQNTTGTARKEAVAYAHAIGCTRAGAIETTFREETETDLFGEQAVLCGGATALVKQGYETLVDAGYSPEMAYFECLNELKLIVDLMYEGGLSEMWNSVSDTAEYGGLTRGNQVIDESVREEMESILEGVQDGTFAREWISENQANRPSYTQLKAAEEAHEIEAVGEPLRDLFAWSDNEETNDESDVVSEPEAAADD.

A disordered region spans residues 1 to 25 (MTETKTQTETETDEEEGTDTDTALD). The span at 10–19 (TETDEEEGTD) shows a compositional bias: acidic residues. The KARI N-terminal Rossmann domain occupies 24–205 (LDTTIYYDDD…GCTRAGAIET (182 aa)). Residues 49-52 (YGSQ), S75, S77, and 107-110 (DTVQ) contribute to the NADP(+) site. Residue H131 is part of the active site. G157 contributes to the NADP(+) binding site. In terms of domain architecture, KARI C-terminal knotted spans 206–351 (TFREETETDL…EPLRDLFAWS (146 aa)). Residues D214, E218, E250, and E254 each contribute to the Mg(2+) site. S275 contacts substrate. Residues 351 to 372 (SDNEETNDESDVVSEPEAAADD) form a disordered region. Over residues 352–372 (DNEETNDESDVVSEPEAAADD) the composition is skewed to acidic residues.

The protein belongs to the ketol-acid reductoisomerase family. Requires Mg(2+) as cofactor.

It carries out the reaction (2R)-2,3-dihydroxy-3-methylbutanoate + NADP(+) = (2S)-2-acetolactate + NADPH + H(+). The enzyme catalyses (2R,3R)-2,3-dihydroxy-3-methylpentanoate + NADP(+) = (S)-2-ethyl-2-hydroxy-3-oxobutanoate + NADPH + H(+). Its pathway is amino-acid biosynthesis; L-isoleucine biosynthesis; L-isoleucine from 2-oxobutanoate: step 2/4. It functions in the pathway amino-acid biosynthesis; L-valine biosynthesis; L-valine from pyruvate: step 2/4. Its function is as follows. Involved in the biosynthesis of branched-chain amino acids (BCAA). Catalyzes an alkyl-migration followed by a ketol-acid reduction of (S)-2-acetolactate (S2AL) to yield (R)-2,3-dihydroxy-isovalerate. In the isomerase reaction, S2AL is rearranged via a Mg-dependent methyl migration to produce 3-hydroxy-3-methyl-2-ketobutyrate (HMKB). In the reductase reaction, this 2-ketoacid undergoes a metal-dependent reduction by NADPH to yield (R)-2,3-dihydroxy-isovalerate. In Haloquadratum walsbyi (strain DSM 16790 / HBSQ001), this protein is Ketol-acid reductoisomerase (NADP(+)).